The following is a 358-amino-acid chain: Methionine import ATP-binding protein MetN (358 aa).

The ABC transporter domain maps to 2–247; the sequence is ITTTGLTKVY…PGSELAHELF (246 aa). 38 to 45 contacts ATP; that stretch reads GQSGAGKS.

It belongs to the ABC transporter superfamily. Methionine importer (TC 3.A.1.24) family. As to quaternary structure, the complex is composed of two ATP-binding proteins (MetN), two transmembrane proteins (MetI) and a solute-binding protein (MetQ).

The protein resides in the cell membrane. It carries out the reaction L-methionine(out) + ATP + H2O = L-methionine(in) + ADP + phosphate + H(+). The catalysed reaction is D-methionine(out) + ATP + H2O = D-methionine(in) + ADP + phosphate + H(+). Part of the ABC transporter complex MetNIQ involved in methionine import. Responsible for energy coupling to the transport system. The protein is Methionine import ATP-binding protein MetN of Streptomyces griseus.